The chain runs to 316 residues: tRNA-dihydrouridine(16) synthase (316 aa).

Residues 7–9 (PME) and Gln68 contribute to the FMN site. Cys98 acts as the Proton donor in catalysis. FMN-binding positions include Lys139, 200–202 (NGE), and 224–225 (GR).

Belongs to the Dus family. DusC subfamily. Requires FMN as cofactor.

It catalyses the reaction 5,6-dihydrouridine(16) in tRNA + NADP(+) = uridine(16) in tRNA + NADPH + H(+). It carries out the reaction 5,6-dihydrouridine(16) in tRNA + NAD(+) = uridine(16) in tRNA + NADH + H(+). Functionally, catalyzes the synthesis of 5,6-dihydrouridine (D), a modified base found in the D-loop of most tRNAs, via the reduction of the C5-C6 double bond in target uridines. Specifically modifies U16 in tRNAs. The protein is tRNA-dihydrouridine(16) synthase of Escherichia coli O157:H7.